We begin with the raw amino-acid sequence, 345 residues long: Ribosomal RNA large subunit methyltransferase F (345 aa).

Over residues 1-14 (MTSKPMTRRPTANN) the composition is skewed to polar residues. Disordered regions lie at residues 1 to 35 (MTSKPMTRRPTANNHRNRSPETAKKLGQLHPRNPH) and 225 to 258 (EANSRKQHNLQRHRGKNENEQISRSSTKSGNAAQ). The span at 229–239 (RKQHNLQRHRG) shows a compositional bias: basic residues. The segment covering 246-258 (ISRSSTKSGNAAQ) has biased composition (polar residues).

This sequence belongs to the methyltransferase superfamily. METTL16/RlmF family.

The protein localises to the cytoplasm. It catalyses the reaction adenosine(1618) in 23S rRNA + S-adenosyl-L-methionine = N(6)-methyladenosine(1618) in 23S rRNA + S-adenosyl-L-homocysteine + H(+). In terms of biological role, specifically methylates the adenine in position 1618 of 23S rRNA. This chain is Ribosomal RNA large subunit methyltransferase F, found in Psychrobacter arcticus (strain DSM 17307 / VKM B-2377 / 273-4).